The chain runs to 155 residues: Arginine repressor (155 aa).

Belongs to the ArgR family.

The protein localises to the cytoplasm. It participates in amino-acid biosynthesis; L-arginine biosynthesis [regulation]. Functionally, regulates arginine biosynthesis genes. This is Arginine repressor from Mannheimia succiniciproducens (strain KCTC 0769BP / MBEL55E).